The sequence spans 359 residues: Peptide chain release factor 1 (359 aa).

Gln235 carries the post-translational modification N5-methylglutamine.

It belongs to the prokaryotic/mitochondrial release factor family. Methylated by PrmC. Methylation increases the termination efficiency of RF1.

It is found in the cytoplasm. In terms of biological role, peptide chain release factor 1 directs the termination of translation in response to the peptide chain termination codons UAG and UAA. The polypeptide is Peptide chain release factor 1 (Polynucleobacter asymbioticus (strain DSM 18221 / CIP 109841 / QLW-P1DMWA-1) (Polynucleobacter necessarius subsp. asymbioticus)).